The sequence spans 225 residues: Holliday junction branch migration complex subunit RuvA (225 aa).

The tract at residues 1–71 (MISWINGDLV…EDSDLLFGFT (71 aa)) is domain I. The interval 72 to 150 (SKDQKNFFIE…SEILSEEEKS (79 aa)) is domain II. Residues 151–161 (KDEFEIKDPEI) form a flexible linker region. The domain III stretch occupies residues 161 to 225 (IIKMIEDLQL…LDEDSSNKDR (65 aa)).

This sequence belongs to the RuvA family. As to quaternary structure, homotetramer. Forms an RuvA(8)-RuvB(12)-Holliday junction (HJ) complex. HJ DNA is sandwiched between 2 RuvA tetramers; dsDNA enters through RuvA and exits via RuvB. An RuvB hexamer assembles on each DNA strand where it exits the tetramer. Each RuvB hexamer is contacted by two RuvA subunits (via domain III) on 2 adjacent RuvB subunits; this complex drives branch migration. In the full resolvosome a probable DNA-RuvA(4)-RuvB(12)-RuvC(2) complex forms which resolves the HJ.

It localises to the cytoplasm. The RuvA-RuvB-RuvC complex processes Holliday junction (HJ) DNA during genetic recombination and DNA repair, while the RuvA-RuvB complex plays an important role in the rescue of blocked DNA replication forks via replication fork reversal (RFR). RuvA specifically binds to HJ cruciform DNA, conferring on it an open structure. The RuvB hexamer acts as an ATP-dependent pump, pulling dsDNA into and through the RuvAB complex. HJ branch migration allows RuvC to scan DNA until it finds its consensus sequence, where it cleaves and resolves the cruciform DNA. The chain is Holliday junction branch migration complex subunit RuvA from Prochlorococcus marinus (strain AS9601).